Reading from the N-terminus, the 92-residue chain is Small ribosomal subunit protein uS19c (92 aa).

Belongs to the universal ribosomal protein uS19 family.

It localises to the plastid. Its subcellular location is the chloroplast. In terms of biological role, protein S19 forms a complex with S13 that binds strongly to the 16S ribosomal RNA. This chain is Small ribosomal subunit protein uS19c, found in Phalaenopsis aphrodite subsp. formosana (Moth orchid).